We begin with the raw amino-acid sequence, 406 residues long: Tryptophan 2,3-dioxygenase (406 aa).

Residues 72-76 and Arg144 each bind substrate; that span reads FIVTH. Position 328 (His328) interacts with heme. Residue Thr342 participates in substrate binding.

The protein belongs to the tryptophan 2,3-dioxygenase family. As to quaternary structure, homotetramer. Dimer of dimers. Heme is required as a cofactor.

It catalyses the reaction L-tryptophan + O2 = N-formyl-L-kynurenine. Its pathway is amino-acid degradation; L-tryptophan degradation via kynurenine pathway; L-kynurenine from L-tryptophan: step 1/2. Its function is as follows. Heme-dependent dioxygenase that catalyzes the oxidative cleavage of the L-tryptophan (L-Trp) pyrrole ring and converts L-tryptophan to N-formyl-L-kynurenine. Catalyzes the oxidative cleavage of the indole moiety. The sequence is that of Tryptophan 2,3-dioxygenase from Xenopus laevis (African clawed frog).